We begin with the raw amino-acid sequence, 348 residues long: Probable tRNA pseudouridine synthase B (348 aa).

The active-site Nucleophile is the D93. A PUA domain is found at 260–335; that stretch reads LKKIYILDSA…IAVDIERVFM (76 aa).

It belongs to the pseudouridine synthase TruB family. Type 2 subfamily.

The catalysed reaction is uridine(55) in tRNA = pseudouridine(55) in tRNA. Functionally, could be responsible for synthesis of pseudouridine from uracil-55 in the psi GC loop of transfer RNAs. The protein is Probable tRNA pseudouridine synthase B of Nanoarchaeum equitans (strain Kin4-M).